The chain runs to 319 residues: MKRIGVLTSGGDSPGMNAAIRAVVRKAIFHDIEVYGIYHGYAGLISGHIEKLELGSVGDIIHRGGTKLYTARCPEFKDPEVRLKGIEQLKKHGIEGLVVIGGDGSYQGAKKLTEQGFPCVGVPGTIDNDIPGTDFTIGFDTALNTVIDAIDKIRDTATSHERTYVIEVMGRHAGDIALWAGLADGAETILIPEEKYDMEDVIARLKRGSERGKKHSIIVVAEGVGSAIDIGKHIEEATSFDTRVTVLGHVQRGGSPSAQDRVLASRLGARAVELLIAGNGGRCVGIQNNKLVDHDIIEALAQKHTIDKDMYQLSKELSI.

Gly-11 provides a ligand contact to ATP. 21–25 (RAVVR) contacts ADP. Residues 72-73 (RC) and 102-105 (GDGS) contribute to the ATP site. Asp-103 serves as a coordination point for Mg(2+). Residue 125–127 (TID) participates in substrate binding. The Proton acceptor role is filled by Asp-127. An ADP-binding site is contributed by Arg-154. Substrate is bound by residues Arg-162 and 169-171 (MGR). Residues 185-187 (GAE), Arg-211, and 213-215 (KKH) each bind ADP. Substrate-binding positions include Glu-222, Arg-243, and 249 to 252 (HVQR).

This sequence belongs to the phosphofructokinase type A (PFKA) family. ATP-dependent PFK group I subfamily. Prokaryotic clade 'B1' sub-subfamily. In terms of assembly, homotetramer. Mg(2+) is required as a cofactor.

It is found in the cytoplasm. It carries out the reaction beta-D-fructose 6-phosphate + ATP = beta-D-fructose 1,6-bisphosphate + ADP + H(+). It participates in carbohydrate degradation; glycolysis; D-glyceraldehyde 3-phosphate and glycerone phosphate from D-glucose: step 3/4. With respect to regulation, allosterically activated by ADP and other diphosphonucleosides, and allosterically inhibited by phosphoenolpyruvate. Its function is as follows. Catalyzes the phosphorylation of D-fructose 6-phosphate to fructose 1,6-bisphosphate by ATP, the first committing step of glycolysis. This chain is ATP-dependent 6-phosphofructokinase, found in Bacillus mycoides (strain KBAB4) (Bacillus weihenstephanensis).